Here is a 291-residue protein sequence, read N- to C-terminus: Small ribosomal subunit biogenesis GTPase RsgA 2 (291 aa).

The region spanning 63–221 is the CP-type G domain; it reads ENALVRPPVA…VADTPGFSSI (159 aa). GTP-binding positions include 112-115 and 164-172; these read SKMD and GQSGVGKST. Zn(2+) is bound by residues Cys-245, Cys-250, His-252, and Cys-258.

This sequence belongs to the TRAFAC class YlqF/YawG GTPase family. RsgA subfamily. As to quaternary structure, monomer. Associates with 30S ribosomal subunit, binds 16S rRNA. The cofactor is Zn(2+).

The protein resides in the cytoplasm. In terms of biological role, one of several proteins that assist in the late maturation steps of the functional core of the 30S ribosomal subunit. Helps release RbfA from mature subunits. May play a role in the assembly of ribosomal proteins into the subunit. Circularly permuted GTPase that catalyzes slow GTP hydrolysis, GTPase activity is stimulated by the 30S ribosomal subunit. This chain is Small ribosomal subunit biogenesis GTPase RsgA 2, found in Listeria innocua serovar 6a (strain ATCC BAA-680 / CLIP 11262).